A 75-amino-acid chain; its full sequence is Caerin-1.1 (75 aa).

The signal sequence occupies residues 1–22; it reads MASLKKSLFLVLLLGFVSVSIC. The propeptide occupies 23-49; sequence EEEKRQEDEDEHEEEGESQEEGSEEKR. The interval 24–49 is disordered; it reads EEKRQEDEDEHEEEGESQEEGSEEKR. The segment covering 30–45 has biased composition (acidic residues); that stretch reads DEDEHEEEGESQEEGS. Leucine amide is present on L74.

This sequence belongs to the frog skin active peptide (FSAP) family. Caerin subfamily. Post-translationally, the major product is Caerin-1.1; in addition, different peptides are produced that are missing some amino acid residues at the N-terminus or C-terminus. Caerin-1.1.1 and Caerin-1.1.4 are inactive. Expressed by the skin parotoid and/or rostral glands.

The protein localises to the secreted. In terms of biological role, antimicrobial peptide with antibacterial and antiviral activities. Adopts an alpha helical conformation which can disrupt bacterial membranes. Inhibits the formation of NO by neuronal nitric oxide synthase (nNOS) at micromolar concentrations. Acts by a non-competitive mechanism, probably by binding to calcium/calmodulin and as a consequence blocking calmodulin attachment to nNOS. Is inactive. In Ranoidea caerulea (Green tree frog), this protein is Caerin-1.1.